Consider the following 434-residue polypeptide: Serine hydroxymethyltransferase (434 aa).

(6S)-5,6,7,8-tetrahydrofolate is bound by residues leucine 132 and 136–138 (GHL). An N6-(pyridoxal phosphate)lysine modification is found at lysine 241.

Belongs to the SHMT family. As to quaternary structure, homodimer. The cofactor is pyridoxal 5'-phosphate.

It localises to the cytoplasm. It carries out the reaction (6R)-5,10-methylene-5,6,7,8-tetrahydrofolate + glycine + H2O = (6S)-5,6,7,8-tetrahydrofolate + L-serine. It participates in one-carbon metabolism; tetrahydrofolate interconversion. Its pathway is amino-acid biosynthesis; glycine biosynthesis; glycine from L-serine: step 1/1. Functionally, catalyzes the reversible interconversion of serine and glycine with tetrahydrofolate (THF) serving as the one-carbon carrier. This reaction serves as the major source of one-carbon groups required for the biosynthesis of purines, thymidylate, methionine, and other important biomolecules. Also exhibits THF-independent aldolase activity toward beta-hydroxyamino acids, producing glycine and aldehydes, via a retro-aldol mechanism. This chain is Serine hydroxymethyltransferase, found in Nitrobacter hamburgensis (strain DSM 10229 / NCIMB 13809 / X14).